Here is a 777-residue protein sequence, read N- to C-terminus: UPF0313 protein VP1980 (777 aa).

Residues 363 to 642 form the Radical SAM core domain; that stretch reads AYDMIKTSVN…KALLRYHDPA (280 aa). Positions 377, 381, and 384 each coordinate [4Fe-4S] cluster. A disordered region spans residues 675 to 777; that stretch reads AQTPAQRRKS…PAGQRKPKRR (103 aa). The segment covering 680-698 has biased composition (basic residues); that stretch reads QRRKSGRHGANRFATKHTK. Positions 709-719 are enriched in basic and acidic residues; it reads KRAEGGSKDGK. Polar residues predominate over residues 736–747; the sequence is PASNGQRPSGNG. The segment covering 755–769 has biased composition (low complexity); sequence KPQGQGRPQGQGKPA.

The protein belongs to the UPF0313 family. The cofactor is [4Fe-4S] cluster.

This chain is UPF0313 protein VP1980, found in Vibrio parahaemolyticus serotype O3:K6 (strain RIMD 2210633).